A 252-amino-acid chain; its full sequence is Trans-aconitate 2-methyltransferase (252 aa).

The protein belongs to the methyltransferase superfamily. Tam family.

The protein resides in the cytoplasm. It catalyses the reaction trans-aconitate + S-adenosyl-L-methionine = (E)-3-(methoxycarbonyl)pent-2-enedioate + S-adenosyl-L-homocysteine. In terms of biological role, catalyzes the S-adenosylmethionine monomethyl esterification of trans-aconitate. This Shigella flexneri serotype 5b (strain 8401) protein is Trans-aconitate 2-methyltransferase.